A 262-amino-acid polypeptide reads, in one-letter code: 3-methyl-2-oxobutanoate hydroxymethyltransferase (262 aa).

Positions 42 and 81 each coordinate Mg(2+). 3-methyl-2-oxobutanoate contacts are provided by residues 42–43 (DS), D81, and K110. E112 is a binding site for Mg(2+). The active-site Proton acceptor is E180.

This sequence belongs to the PanB family. In terms of assembly, homodecamer; pentamer of dimers. Mg(2+) serves as cofactor.

Its subcellular location is the cytoplasm. It catalyses the reaction 3-methyl-2-oxobutanoate + (6R)-5,10-methylene-5,6,7,8-tetrahydrofolate + H2O = 2-dehydropantoate + (6S)-5,6,7,8-tetrahydrofolate. It participates in cofactor biosynthesis; (R)-pantothenate biosynthesis; (R)-pantoate from 3-methyl-2-oxobutanoate: step 1/2. Its function is as follows. Catalyzes the reversible reaction in which hydroxymethyl group from 5,10-methylenetetrahydrofolate is transferred onto alpha-ketoisovalerate to form ketopantoate. This is 3-methyl-2-oxobutanoate hydroxymethyltransferase from Legionella pneumophila (strain Paris).